Reading from the N-terminus, the 217-residue chain is Outer-membrane lipoprotein LolB (217 aa).

A signal peptide spans 1 to 20 (MSKTVRTLALGGLVLAGLSA). Cysteine 21 carries the N-palmitoyl cysteine lipid modification. Residue cysteine 21 is the site of S-diacylglycerol cysteine attachment. The interval 105–124 (DTTSGAGRLEGLEGGPRSGP) is disordered.

This sequence belongs to the LolB family. As to quaternary structure, monomer.

The protein resides in the cell outer membrane. Functionally, plays a critical role in the incorporation of lipoproteins in the outer membrane after they are released by the LolA protein. The polypeptide is Outer-membrane lipoprotein LolB (Xanthomonas axonopodis pv. citri (strain 306)).